We begin with the raw amino-acid sequence, 674 residues long: Zyxin (674 aa).

Residues 35–447 (PPKPKVNPFR…PHQDQTSGSQ (413 aa)) form a disordered region. Residues 86–109 (LPPPPPNEEPMSPPGSSFPPPPPS) are compositionally biased toward pro residues. Positions 110–120 (FGDDGPGSPLG) are enriched in low complexity. 5 stretches are compositionally biased toward pro residues: residues 121-148 (LFPP…PPPL), 162-180 (ASVP…PAPP), 187-209 (KPAP…PPQS), 222-240 (KPSP…PPVA), and 254-266 (AAPP…PPAP). 2 stretches are compositionally biased toward basic and acidic residues: residues 328–341 (AKHE…KHEA) and 358–387 (QRDK…RGER). 3 consecutive LIM zinc-binding domains span residues 481–542 (ELCG…TLEC), 543–600 (CAVC…RRYA), and 601–671 (PRCT…RARA).

This sequence belongs to the zyxin/ajuba family. Interacts (via LIM2 domain) with hesx1/anf1.

The protein localises to the cytoplasm. The protein resides in the cytoskeleton. It is found in the cell junction. It localises to the focal adhesion. Functionally, adhesion plaque protein. May be a component of a signal transduction pathway that mediates adhesion-stimulated changes in gene expression. Suppresses the transcription-repressing activity of hesx1/anf1. This chain is Zyxin, found in Xenopus tropicalis (Western clawed frog).